Here is a 337-residue protein sequence, read N- to C-terminus: MLRIAVDCMGGDYAPLEIVRGCILAAKELGYKIYLVGDKEQIIPILEKAKEHNNSLLEVVHAPDKVEMHEPPSNVLKKKNSSLYVAGMLVRKGEADGLVSAGNTGAVLAVGKFIVGAEEEVERPSIGVALPNPKGKTVLIDVGANVDCKPKHLVQFAVIGHTYAEEILGIKNPRVGILSIGEEEGKGNELVKETYPLLKATKLNFKGNAEGRDIYAGTFDVIVCDGFVGNVILKASESLGLAVVQMIKEEIKRSILAKLGALLLMPALNRFKKKADFAEYGGIPLLGAKKPVIITHGRANAKAIKNAVRVAGEFLNTDFNKKLVYNLKTLIPEGVKV.

It belongs to the PlsX family. In terms of assembly, homodimer. Probably interacts with PlsY.

It is found in the cytoplasm. It carries out the reaction a fatty acyl-[ACP] + phosphate = an acyl phosphate + holo-[ACP]. It participates in lipid metabolism; phospholipid metabolism. In terms of biological role, catalyzes the reversible formation of acyl-phosphate (acyl-PO(4)) from acyl-[acyl-carrier-protein] (acyl-ACP). This enzyme utilizes acyl-ACP as fatty acyl donor, but not acyl-CoA. The protein is Phosphate acyltransferase of Aquifex aeolicus (strain VF5).